Here is a 75-residue protein sequence, read N- to C-terminus: Large ribosomal subunit protein bL31 (75 aa).

It belongs to the bacterial ribosomal protein bL31 family. Type A subfamily. In terms of assembly, part of the 50S ribosomal subunit.

Its function is as follows. Binds the 23S rRNA. This Chlorobium phaeobacteroides (strain BS1) protein is Large ribosomal subunit protein bL31.